The primary structure comprises 338 residues: Heme A synthase (338 aa).

A run of 5 helical transmembrane segments spans residues 6–26 (ITKW…IGGI), 93–113 (GRIT…KGII), 118–138 (IAPY…GWYM), 154–174 (LAFH…QLIK), and 201–221 (VIYL…GLIY). H256 contacts heme. The next 3 membrane-spanning stretches (helical) occupy residues 258 to 278 (LGGY…LKIE), 285 to 305 (IAYF…ITLL), and 308 to 328 (VPII…SVII). H316 is a binding site for heme.

The protein belongs to the COX15/CtaA family. Type 2 subfamily. As to quaternary structure, interacts with CtaB. It depends on heme b as a cofactor.

The protein resides in the cell membrane. The catalysed reaction is Fe(II)-heme o + 2 A + H2O = Fe(II)-heme a + 2 AH2. Its pathway is porphyrin-containing compound metabolism; heme A biosynthesis; heme A from heme O: step 1/1. Functionally, catalyzes the conversion of heme O to heme A by two successive hydroxylations of the methyl group at C8. The first hydroxylation forms heme I, the second hydroxylation results in an unstable dihydroxymethyl group, which spontaneously dehydrates, resulting in the formyl group of heme A. This Rickettsia canadensis (strain McKiel) protein is Heme A synthase.